Here is a 339-residue protein sequence, read N- to C-terminus: Erlin-2 (339 aa).

Over Met1–Gln3 the chain is Cytoplasmic. Residues Leu4–His24 form a helical membrane-spanning segment. Residues Lys25–Asn339 are Extracellular-facing. N-linked (GlcNAc...) asparagine glycosylation occurs at Asn106. The segment at Glu177–Ala309 is interaction with ERLIN1. Lys267 carries the N6-acetyllysine modification.

It belongs to the band 7/mec-2 family. Forms a heteromeric complex with ERLIN1. In complex with ERLIN1, interacts with RNF170. Interacts with activated ITPR1, independently of the degree of ITPR1 polyubiquitination. Interacts with SCAP, INSIG1, SREBF1 and SREBF2 under cholesterol sufficiency conditions; indicative for an association with the SCAP-SREBP-INSIG complex. Probably part of an AMFR/gp78 and INSIG1-containing ubiquitin ligase complex involved in ERAD of HMGCR. Interacts with TMUB1; TMUB1 bridges the association with AMFR. Interacts with SYVN1 and RNF139. Interacts with TMEM259. Interacts with TMEM41B. Post-translationally, deubiquitinated by USP25; leading to stabilization.

Its subcellular location is the endoplasmic reticulum membrane. Functionally, component of the ERLIN1/ERLIN2 complex which mediates the endoplasmic reticulum-associated degradation (ERAD) of inositol 1,4,5-trisphosphate receptors (IP3Rs) such as ITPR1. Promotes sterol-accelerated ERAD of HMGCR probably implicating an AMFR/gp78-containing ubiquitin ligase complex. Involved in regulation of cellular cholesterol homeostasis by regulation the SREBP signaling pathway. May promote ER retention of the SCAP-SREBF complex. This chain is Erlin-2, found in Rattus norvegicus (Rat).